The following is a 206-amino-acid chain: 2-phospho-L-lactate guanylyltransferase (206 aa).

The protein belongs to the CofC family. As to quaternary structure, homodimer.

It carries out the reaction (2S)-2-phospholactate + GTP + H(+) = (2S)-lactyl-2-diphospho-5'-guanosine + diphosphate. It functions in the pathway cofactor biosynthesis; coenzyme F420 biosynthesis. Guanylyltransferase that catalyzes the activation of (2S)-2-phospholactate (2-PL) as (2S)-lactyl-2-diphospho-5'-guanosine, via the condensation of 2-PL with GTP. It is involved in the biosynthesis of coenzyme F420, a hydride carrier cofactor. This is 2-phospho-L-lactate guanylyltransferase from Haloferax volcanii (strain ATCC 29605 / DSM 3757 / JCM 8879 / NBRC 14742 / NCIMB 2012 / VKM B-1768 / DS2) (Halobacterium volcanii).